Reading from the N-terminus, the 149-residue chain is MTSRYAKRLQKELLDLKTNPPPCISITEGDNLDKWVIAVDGTEGSIYQGEHFKLQFKFSSGYPLDSPEVIFIGTPPIHPHIYSNGHICLSILYDNWSPALTVSSVCLSILSMLSGCTEKIRPTDDSKYVSRVLNKSPKEVRWMFHDDTV.

The region spanning 4–149 is the UBC core domain; it reads RYAKRLQKEL…VRWMFHDDTV (146 aa). Cys-88 (glycyl thioester intermediate) is an active-site residue.

It belongs to the ubiquitin-conjugating enzyme family.

It carries out the reaction S-ubiquitinyl-[E1 ubiquitin-activating enzyme]-L-cysteine + [E2 ubiquitin-conjugating enzyme]-L-cysteine = [E1 ubiquitin-activating enzyme]-L-cysteine + S-ubiquitinyl-[E2 ubiquitin-conjugating enzyme]-L-cysteine.. It catalyses the reaction S-ubiquitinyl-[E1 ubiquitin-activating enzyme]-L-cysteine + [acceptor protein]-N-terminal-amino acid = [E1 ubiquitin-activating enzyme]-L-cysteine + N-terminal-ubiquitinyl-[acceptor protein].. Its pathway is protein modification; protein ubiquitination. Functionally, catalyzes the covalent attachment of ubiquitin to other proteins. The protein is Probable ubiquitin-conjugating enzyme E2 W (ube2w) of Dictyostelium discoideum (Social amoeba).